Here is a 453-residue protein sequence, read N- to C-terminus: Omega-3 fatty acid desaturase, chloroplastic (453 aa).

Positions 171–175 (HDCGH) match the Histidine box-1 motif. Positions 207–211 (HRTHH) match the Histidine box-2 motif. The Histidine box-3 motif lies at 374-378 (HVIHH).

Belongs to the fatty acid desaturase type 1 family.

Its subcellular location is the plastid. It localises to the chloroplast membrane. Its pathway is lipid metabolism; polyunsaturated fatty acid biosynthesis. Chloroplast omega-3 fatty acid desaturase introduces the third double bond in the biosynthesis of 16:3 and 18:3 fatty acids, important constituents of plant membranes. It is thought to use ferredoxin as an electron donor and to act on fatty acids esterified to galactolipids, sulfolipids and phosphatidylglycerol. This is Omega-3 fatty acid desaturase, chloroplastic (FAD7) from Glycine max (Soybean).